A 265-amino-acid polypeptide reads, in one-letter code: tRNA pseudouridine synthase A (265 aa).

Residue Asp-58 is the Nucleophile of the active site. Position 116 (Tyr-116) interacts with substrate.

The protein belongs to the tRNA pseudouridine synthase TruA family. Homodimer.

It carries out the reaction uridine(38/39/40) in tRNA = pseudouridine(38/39/40) in tRNA. In terms of biological role, formation of pseudouridine at positions 38, 39 and 40 in the anticodon stem and loop of transfer RNAs. This Neisseria meningitidis serogroup B (strain ATCC BAA-335 / MC58) protein is tRNA pseudouridine synthase A.